Consider the following 219-residue polypeptide: RPA-interacting protein (219 aa).

S18 carries the phosphoserine modification. K121 participates in a covalent cross-link: Glycyl lysine isopeptide (Lys-Gly) (interchain with G-Cter in SUMO); in isoform 2. Residues 137–212 form an RIP-type zinc finger; it reads CPVCTKYNLR…SSLLMSCLAC (76 aa). The mediates nuclear export stretch occupies residues 164 to 180; it reads SSELTEQKLRACLEGSI.

In terms of assembly, interacts with the RPA1 subunit of RPA complex. Post-translationally, sumoylated. Sumoylation is required for localization in the nuclear PML body and transport of RPA complex in PML body. Upon UV irradiation and during S phase, it is desumoylated, releasing RPA complex that is translocated to sites of DNA damage. Sumoylation takes place at different Lys residues. Variant 'Lys-103' adds a sumoylation site and increases total sumoylation levels. Widely expressed. Expressed in pancreas, kidney, muscle, liver, lung, placenta, brain, heart, leukocytes, colon, intestine, ovary, testis, prostate, thymus and spleen.

It is found in the cytoplasm. The protein resides in the nucleus. It localises to the PML body. In terms of biological role, mediates the import of RPA complex into the nucleus, possibly via some interaction with importin beta. Isoform 2 is sumoylated and mediates the localization of RPA complex into the PML body of the nucleus, thereby participating in RPA function in DNA metabolism. The polypeptide is RPA-interacting protein (RPAIN) (Homo sapiens (Human)).